Reading from the N-terminus, the 135-residue chain is Mini-ribonuclease 3 (135 aa).

D17 is an active-site residue.

The protein belongs to the MrnC RNase family. As to quaternary structure, homodimer. Mg(2+) is required as a cofactor.

It is found in the cytoplasm. Its function is as follows. Involved in correct processing of both the 5' and 3' ends of 23S rRNA precursor. Processes 30S rRNA precursor transcript even in absence of ribonuclease 3 (Rnc); Rnc processes 30S rRNA into smaller rRNA precursors. This chain is Mini-ribonuclease 3, found in Bacillus cereus (strain ATCC 14579 / DSM 31 / CCUG 7414 / JCM 2152 / NBRC 15305 / NCIMB 9373 / NCTC 2599 / NRRL B-3711).